We begin with the raw amino-acid sequence, 437 residues long: Beta-1,3-galactosyl-O-glycosyl-glycoprotein beta-1,6-N-acetylglucosaminyltransferase 3 (437 aa).

The Cytoplasmic portion of the chain corresponds to 1-6 (MVSWRR). The helical; Signal-anchor for type II membrane protein transmembrane segment at 7–27 (FCWHYHGWTLGCYMLLAIIAL) threads the bilayer. Residues 28–437 (KLSLRLKCDF…RHKAIYGTEL (410 aa)) are Lumenal-facing. 4 disulfide bridges follow: Cys70/Cys227, Cys161/Cys381, Cys182/Cys209, and Cys390/Cys422. An N-linked (GlcNAc...) asparagine glycan is attached at Asn288.

It belongs to the glycosyltransferase 14 family. N-glycosylated.

Its subcellular location is the golgi apparatus membrane. The catalysed reaction is a 3-O-[beta-D-galactosyl-(1-&gt;3)-N-acetyl-alpha-D-galactosaminyl]-L-seryl-[protein] + UDP-N-acetyl-alpha-D-glucosamine = 3-O-{beta-D-galactosyl-(1-&gt;3)-[N-acetyl-beta-D-glucosaminyl-(1-&gt;6)]-N-acetyl-alpha-D-galactosaminyl}-L-seryl-[protein] + UDP + H(+). The enzyme catalyses a 3-O-[beta-D-galactosyl-(1-&gt;3)-N-acetyl-alpha-D-galactosaminyl]-L-threonyl-[protein] + UDP-N-acetyl-alpha-D-glucosamine = a 3-O-{beta-D-galactosyl-(1-&gt;3)-[N-acetyl-beta-D-glucosaminyl-(1-&gt;6)]-N-acetyl-alpha-D-galactosaminyl}-L-threonyl-[protein] + UDP + H(+). It carries out the reaction a beta-D-Gal-(1-&gt;4)-beta-D-GlcNAc-(1-&gt;3)-beta-D-Gal-(1-&gt;4)-beta-D-GlcNAc derivative + UDP-N-acetyl-alpha-D-glucosamine = a beta-D-Gal-(1-&gt;4)-beta-D-GlcNAc-(1-&gt;3)-[beta-D-GlcNAc-(1-&gt;6)]-beta-D-Gal-(1-&gt;4)-N-acetyl-beta-D-glucosaminyl derivative + UDP + H(+). It catalyses the reaction 3-O-[N-acetyl-beta-D-glucosaminyl-(1-&gt;3)-N-acetyl-alpha-D-galactosaminyl]-L-seryl-[protein] + UDP-N-acetyl-alpha-D-glucosamine = 3-O-[N-acetyl-beta-D-glucosaminyl-(1-&gt;3)-[N-acetyl-beta-D-glucosaminyl-(1-&gt;6)]-N-acetyl-alpha-D-galactosaminyl]-L-seryl-[protein] + UDP + H(+). The catalysed reaction is a 3-O-[N-acetyl-beta-D-glucosaminyl-(1-&gt;3)-N-acetyl-alpha-D-galactosaminyl]-L-threonyl-[protein] + UDP-N-acetyl-alpha-D-glucosamine = 3-O-[N-acetyl-beta-D-glucosaminyl-(1-&gt;3)-[N-acetyl-beta-D-glucosaminyl-(1-&gt;6)]-N-acetyl-alpha-D-galactosaminyl]-L-threonyl-[protein] + UDP + H(+). The protein operates within protein modification; protein glycosylation. Glycosyltransferase that can synthesize all known mucin beta 6 N-acetylglucosaminides. Mediates core 2 and core 4 O-glycan branching, 2 important steps in mucin-type biosynthesis. Also has I-branching enzyme activity by converting linear into branched poly-N-acetyllactosaminoglycans, leading to introduce the blood group I antigen during embryonic development. This Rattus norvegicus (Rat) protein is Beta-1,3-galactosyl-O-glycosyl-glycoprotein beta-1,6-N-acetylglucosaminyltransferase 3 (Gcnt3).